A 91-amino-acid polypeptide reads, in one-letter code: uncharacterized protein (91 aa).

A helical membrane pass occupies residues 12–34; sequence FAIVYANITFLFYYLLDFTLPFH.

The protein resides in the membrane. This is an uncharacterized protein from Saccharomyces cerevisiae (strain ATCC 204508 / S288c) (Baker's yeast).